A 424-amino-acid chain; its full sequence is CinA-like protein (424 aa).

This sequence belongs to the CinA family.

The chain is CinA-like protein from Shewanella loihica (strain ATCC BAA-1088 / PV-4).